Consider the following 332-residue polypeptide: Mitoferrin-1 (332 aa).

Solcar repeat units follow at residues 31-119 (ASLG…IKRS), 129-213 (NSHI…MQEH), and 220-314 (YRPE…FKYF). The next 6 helical transmembrane spans lie at 33 to 52 (LGTH…TVMY), 94 to 113 (GLNI…FACY), 131 to 150 (HIAN…AVMN), 188 to 207 (SYST…FITY), 222 to 241 (PETH…AVTT), and 289 to 308 (GIQA…WSVY).

This sequence belongs to the mitochondrial carrier (TC 2.A.29) family. In terms of tissue distribution, highly expressed in hematopoietic organs, Expressed in the intermediate cell mass (ICM), a tissue equivalent to the mammalian extraembryonic yolk-sac blood islands. Colocalizes with gata1.

It is found in the mitochondrion inner membrane. The enzyme catalyses Fe(2+)(in) = Fe(2+)(out). Functionally, mitochondrial iron transporter that specifically mediates iron uptake in developing erythroid cells, thereby playing an essential role in heme biosynthesis. The polypeptide is Mitoferrin-1 (slc25a37) (Danio rerio (Zebrafish)).